A 576-amino-acid polypeptide reads, in one-letter code: Peroxisomal targeting signal receptor (576 aa).

Residue C10 forms a Glycyl cysteine thioester (Cys-Gly) (interchain with G-Cter in ubiquitin) linkage. The interval 11 to 33 is amphipathic helix 1 (AH1); the sequence is AAGSNPLAQFTKHTQHDTSLQQS. Residue K22 forms a Glycyl lysine isopeptide (Lys-Gly) (interchain with G-Cter in ubiquitin) linkage. The interval 58–75 is amphipathic helix 2 (AH2); sequence RQQMDQFMQQQNNPAFNF. 2 consecutive short sequence motifs (wxxxF/Y motif) follow at residues 100–104 and 128–132; these read WNQEF and WAQDF. The interval 176-195 is disordered; it reads AQMQQQNPAQAQTSEQSQTQ. Residues 196-200 carry the WxxxF/Y motif 3 motif; that stretch reads WEDQF. The amphipathic helix 4 (AH4) stretch occupies residues 224 to 240; that stretch reads FEQVWDDIQVSYADVEL. Residues 249 to 253 carry the WxxxF/Y motif 4 motif; that stretch reads WEKDF. 7 TPR repeats span residues 278-311, 312-345, 346-383, 384-421, 422-455, 456-489, and 490-523; these read PDAY…DPKH, VDAW…DPTN, LAAL…IASR, ARSS…ASMD, ADVQ…EPDK, ALNW…NPNF, and VRAR…HEVE.

This sequence belongs to the peroxisomal targeting signal receptor family. As to quaternary structure, interacts (via WxxxF/Y and LVxEF motifs) with PEX14; promoting translocation through the PEX13-PEX14 docking complex. Interacts with PEX8. A disulfide bond is created between Cys-10 and Cys-338 or Cys-444. In terms of processing, monoubiquitinated at Cys-10 by PEX2 during PEX5 passage through the retrotranslocation channel: monoubiquitination acts as a signal for PEX5 extraction and is required for proper export from peroxisomes and recycling. When PEX5 recycling is compromised, polyubiquitinated at Lys-22 by PEX10 during its passage through the retrotranslocation channel, leading to its degradation.

It localises to the peroxisome membrane. The protein localises to the cytoplasm. It is found in the cytosol. The protein resides in the peroxisome matrix. Its function is as follows. Receptor that mediates peroxisomal import of proteins containing a C-terminal PTS1-type tripeptide peroxisomal targeting signal (SKL-type). Binds to cargo proteins containing a PTS1 peroxisomal targeting signal in the cytosol, and translocates them into the peroxisome matrix by passing through the peroxisomal docking complex along with cargo proteins. PEX5 receptor is then retrotranslocated into the cytosol, leading to release of bound cargo in the peroxisome matrix, and reset for a subsequent peroxisome import cycle. Required for PEX7 ubiquitination. In Komagataella phaffii (strain GS115 / ATCC 20864) (Yeast), this protein is Peroxisomal targeting signal receptor.